A 271-amino-acid polypeptide reads, in one-letter code: Putative phosphoenolpyruvate synthase regulatory protein (271 aa).

151–158 (GVSRSGKT) provides a ligand contact to ADP.

The protein belongs to the pyruvate, phosphate/water dikinase regulatory protein family. PSRP subfamily.

It catalyses the reaction [pyruvate, water dikinase] + ADP = [pyruvate, water dikinase]-phosphate + AMP + H(+). The enzyme catalyses [pyruvate, water dikinase]-phosphate + phosphate + H(+) = [pyruvate, water dikinase] + diphosphate. Bifunctional serine/threonine kinase and phosphorylase involved in the regulation of the phosphoenolpyruvate synthase (PEPS) by catalyzing its phosphorylation/dephosphorylation. The protein is Putative phosphoenolpyruvate synthase regulatory protein of Burkholderia multivorans (strain ATCC 17616 / 249).